Consider the following 91-residue polypeptide: Acylphosphatase (91 aa).

The region spanning 5-91 (RAHLRIYGRV…EGLEGFKVVG (87 aa)) is the Acylphosphatase-like domain. Active-site residues include Arg-20 and Asn-38.

It belongs to the acylphosphatase family.

It catalyses the reaction an acyl phosphate + H2O = a carboxylate + phosphate + H(+). The chain is Acylphosphatase (acyP) from Thermococcus kodakarensis (strain ATCC BAA-918 / JCM 12380 / KOD1) (Pyrococcus kodakaraensis (strain KOD1)).